A 449-amino-acid polypeptide reads, in one-letter code: Tubulin alpha-1C chain (449 aa).

The MREC motif motif lies at 1-4 (MREC). Gln11 contributes to the GTP binding site. N6-acetyllysine is present on Lys40. Residues Glu71, Ser140, Gly144, Thr145, Thr179, Asn206, and Asn228 each contribute to the GTP site. Position 71 (Glu71) interacts with Mg(2+). Glu254 is a catalytic residue. A 3'-nitrotyrosine modification is found at Tyr282. Residue Tyr432 is modified to Phosphotyrosine. Phosphoserine is present on Ser439. A 3'-nitrotyrosine modification is found at Tyr449.

This sequence belongs to the tubulin family. In terms of assembly, dimer of alpha and beta chains. A typical microtubule is a hollow water-filled tube with an outer diameter of 25 nm and an inner diameter of 15 nM. Alpha-beta heterodimers associate head-to-tail to form protofilaments running lengthwise along the microtubule wall with the beta-tubulin subunit facing the microtubule plus end conferring a structural polarity. Microtubules usually have 13 protofilaments but different protofilament numbers can be found in some organisms and specialized cells. Mg(2+) is required as a cofactor. Post-translationally, some glutamate residues at the C-terminus are polyglycylated, resulting in polyglycine chains on the gamma-carboxyl group. Glycylation is mainly limited to tubulin incorporated into axonemes (cilia and flagella) whereas glutamylation is prevalent in neuronal cells, centrioles, axonemes, and the mitotic spindle. Both modifications can coexist on the same protein on adjacent residues, and lowering polyglycylation levels increases polyglutamylation, and reciprocally. Cilia and flagella glycylation is required for their stability and maintenance. Flagella glycylation controls sperm motility. In terms of processing, some glutamate residues at the C-terminus are polyglutamylated, resulting in polyglutamate chains on the gamma-carboxyl group. Polyglutamylation plays a key role in microtubule severing by spastin (SPAST). SPAST preferentially recognizes and acts on microtubules decorated with short polyglutamate tails: severing activity by SPAST increases as the number of glutamates per tubulin rises from one to eight, but decreases beyond this glutamylation threshold. Glutamylation is also involved in cilia motility. Acetylation of alpha chains at Lys-40 is located inside the microtubule lumen. This modification has been correlated with increased microtubule stability, intracellular transport and ciliary assembly. Post-translationally, methylation of alpha chains at Lys-40 is found in mitotic microtubules and is required for normal mitosis and cytokinesis contributing to genomic stability. In terms of processing, nitration of Tyr-449 is irreversible and interferes with normal dynein intracellular distribution. Undergoes a tyrosination/detyrosination cycle, the cyclic removal and re-addition of a C-terminal tyrosine residue by the enzymes tubulin tyrosine carboxypeptidase (MATCAP1, VASH1 or VASH2) and tubulin tyrosine ligase (TTL), respectively. Post-translationally, tyrosination promotes microtubule interaction with CAP-Gly domain-containing proteins such as CLIP1, CLIP2 and DCTN1. Tyrosination regulates the initiation of dynein-dynactin motility via interaction with DCTN1, which brings the dynein-dynactin complex into contact with microtubules. In neurons, tyrosinated tubulins mediate the initiation of retrograde vesicle transport. In terms of processing, detyrosination is involved in metaphase plate congression by guiding chromosomes during mitosis: detyrosination promotes interaction with CENPE, promoting pole-proximal transport of chromosomes toward the equator. Detyrosination increases microtubules-dependent mechanotransduction in dystrophic cardiac and skeletal muscle. In cardiomyocytes, detyrosinated microtubules are required to resist to contractile compression during contraction: detyrosination promotes association with desmin (DES) at force-generating sarcomeres, leading to buckled microtubules and mechanical resistance to contraction. In terms of tissue distribution, minor alpha-tubulin expressed in all tissues.

The protein resides in the cytoplasm. It is found in the cytoskeleton. It catalyses the reaction GTP + H2O = GDP + phosphate + H(+). In terms of biological role, tubulin is the major constituent of microtubules, a cylinder consisting of laterally associated linear protofilaments composed of alpha- and beta-tubulin heterodimers. Microtubules grow by the addition of GTP-tubulin dimers to the microtubule end, where a stabilizing cap forms. Below the cap, tubulin dimers are in GDP-bound state, owing to GTPase activity of alpha-tubulin. In Mus musculus (Mouse), this protein is Tubulin alpha-1C chain (Tuba1c).